A 348-amino-acid chain; its full sequence is tRNA N6-adenosine threonylcarbamoyltransferase (348 aa).

Positions 111 and 115 each coordinate Fe cation. Substrate is bound by residues L134–G138, D167, G180, D184, and N280. D308 lines the Fe cation pocket.

This sequence belongs to the KAE1 / TsaD family. It depends on Fe(2+) as a cofactor.

The protein resides in the cytoplasm. It catalyses the reaction L-threonylcarbamoyladenylate + adenosine(37) in tRNA = N(6)-L-threonylcarbamoyladenosine(37) in tRNA + AMP + H(+). Functionally, required for the formation of a threonylcarbamoyl group on adenosine at position 37 (t(6)A37) in tRNAs that read codons beginning with adenine. Is involved in the transfer of the threonylcarbamoyl moiety of threonylcarbamoyl-AMP (TC-AMP) to the N6 group of A37, together with TsaE and TsaB. TsaD likely plays a direct catalytic role in this reaction. In Rippkaea orientalis (strain PCC 8801 / RF-1) (Cyanothece sp. (strain PCC 8801)), this protein is tRNA N6-adenosine threonylcarbamoyltransferase.